The following is a 637-amino-acid chain: Threonine--tRNA ligase (637 aa).

In terms of domain architecture, TGS spans Met-1 to Thr-61. A catalytic region spans residues Asp-242–Pro-533. Cys-333, His-384, and His-510 together coordinate Zn(2+).

It belongs to the class-II aminoacyl-tRNA synthetase family. As to quaternary structure, homodimer. The cofactor is Zn(2+).

The protein localises to the cytoplasm. It catalyses the reaction tRNA(Thr) + L-threonine + ATP = L-threonyl-tRNA(Thr) + AMP + diphosphate + H(+). Catalyzes the attachment of threonine to tRNA(Thr) in a two-step reaction: L-threonine is first activated by ATP to form Thr-AMP and then transferred to the acceptor end of tRNA(Thr). Also edits incorrectly charged L-seryl-tRNA(Thr). The protein is Threonine--tRNA ligase of Neisseria meningitidis serogroup C (strain 053442).